A 338-amino-acid polypeptide reads, in one-letter code: 3-keto-steroid reductase erg27 (338 aa).

Residues Leu16, Thr44, Lys50, and Asp75 each contribute to the NADP(+) site. Residues Ser180 and Tyr203 each act as proton donor in the active site. Residues Tyr203, Lys207, and Thr236 each contribute to the NADP(+) site. The active-site Lowers pKa of active site Tyr is Lys207.

Belongs to the short-chain dehydrogenases/reductases (SDR) family. ERG27 subfamily. In terms of assembly, heterotetramer of erg25, erg26, erg27 and erg28. Erg28 acts as a scaffold to tether erg27 and other 4,4-demethylation-related enzymes, forming a demethylation enzyme complex, in the endoplasmic reticulum.

It catalyses the reaction 3-dehydro-4alpha-methylzymosterol + NADPH + H(+) = 4alpha-methylzymosterol + NADP(+). Its pathway is steroid biosynthesis; zymosterol biosynthesis; zymosterol from lanosterol: step 5/6. It functions in the pathway steroid metabolism; ergosterol biosynthesis. Its function is as follows. 3-keto-steroid reductase; part of the third module of ergosterol biosynthesis pathway that includes by the late steps of the pathway. Erg27 is a catalytic component of the C-4 demethylation complex that catalyze the reduction of the keto group on the C-3. The third module or late pathway involves the ergosterol synthesis itself through consecutive reactions that mainly occur in the endoplasmic reticulum (ER) membrane. Firstly, the squalene synthase erg9 catalyzes the condensation of 2 farnesyl pyrophosphate moieties to form squalene, which is the precursor of all steroids. Secondly, squalene is converted into lanosterol by the consecutive action of the squalene epoxidase erg1 and the lanosterol synthase erg7. The lanosterol 14-alpha-demethylase erg11/cyp1 catalyzes C14-demethylation of lanosterol to produce 4,4'-dimethyl cholesta-8,14,24-triene-3-beta-ol. In the next steps, a complex process involving various demethylation, reduction and desaturation reactions catalyzed by the C-14 reductase erg24 and the C-4 demethylation complex erg25-erg26-erg27 leads to the production of zymosterol. Erg28 likely functions in the C-4 demethylation complex reaction by tethering erg26 and Erg27 to the endoplasmic reticulum or to facilitate interaction between these proteins. Then, the sterol 24-C-methyltransferase erg6 catalyzes the methyl transfer from S-adenosyl-methionine to the C-24 of zymosterol to form fecosterol. The C-8 sterol isomerase erg2 catalyzes the reaction which results in unsaturation at C-7 in the B ring of sterols and thus converts fecosterol to episterol. The sterol-C5-desaturases erg31 and erg32 then catalyze the introduction of a C-5 double bond in the B ring to produce 5-dehydroepisterol. The C-22 sterol desaturase erg5 further converts 5-dehydroepisterol into ergosta-5,7,22,24(28)-tetraen-3beta-ol by forming the C-22(23) double bond in the sterol side chain. Finally, ergosta-5,7,22,24(28)-tetraen-3beta-ol is substrate of the C-24(28) sterol reductase erg4 to produce ergosterol. In the genus Schizosaccharomyces, a second route exists between lanosterol and fecosterol, via the methylation of lanosterol to eburicol by erg6, followed by C14-demethylation by erg11/cyp1 and C4-demethylation by the demethylation complex erg25-erg26-erg27. This chain is 3-keto-steroid reductase erg27, found in Schizosaccharomyces pombe (strain 972 / ATCC 24843) (Fission yeast).